We begin with the raw amino-acid sequence, 246 residues long: Ribonuclease PH (246 aa).

Phosphate-binding positions include arginine 91 and 129-131 (GTR).

This sequence belongs to the RNase PH family. As to quaternary structure, homohexameric ring arranged as a trimer of dimers.

The catalysed reaction is tRNA(n+1) + phosphate = tRNA(n) + a ribonucleoside 5'-diphosphate. Its function is as follows. Phosphorolytic 3'-5' exoribonuclease that plays an important role in tRNA 3'-end maturation. Removes nucleotide residues following the 3'-CCA terminus of tRNAs; can also add nucleotides to the ends of RNA molecules by using nucleoside diphosphates as substrates, but this may not be physiologically important. Probably plays a role in initiation of 16S rRNA degradation (leading to ribosome degradation) during starvation. The chain is Ribonuclease PH from Burkholderia cenocepacia (strain ATCC BAA-245 / DSM 16553 / LMG 16656 / NCTC 13227 / J2315 / CF5610) (Burkholderia cepacia (strain J2315)).